The following is a 772-amino-acid chain: Semaphorin-3A (772 aa).

A signal peptide spans 1–22 (MGWLRGIALLSLGVLLAGRVNC). Positions 31–514 (RLKLSYKEML…SATGVSQLPL (484 aa)) constitute a Sema domain. Asn53 is a glycosylation site (N-linked (GlcNAc...) asparagine). Cys103 and Cys114 are oxidised to a cystine. Residue Asn125 is glycosylated (N-linked (GlcNAc...) asparagine). Cystine bridges form between Cys132–Cys141, Cys269–Cys381, Cys293–Cys341, and Cys517–Cys535. Residues 576 to 665 (PSGQTLEEKI…GFIQTLLKVT (90 aa)) form the Ig-like C2-type domain. Asn591 carries N-linked (GlcNAc...) asparagine glycosylation. The cysteines at positions 650 and 723 are disulfide-linked. The segment at 730–772 (DRKQRRQRPANAQVNTNKWKHLQENKKGRNRRTHEFERAPRSV) is disordered. Residues 750 to 772 (HLQENKKGRNRRTHEFERAPRSV) show a composition bias toward basic and acidic residues.

This sequence belongs to the semaphorin family. As to expression, expressed at relatively high levels in brain and muscle, moderate levels in lung, bursa, and heart and virtually absent in liver. Collapsin-1, -2, -3, and -5 bind to overlapping but distinct axon tracts.

The protein localises to the secreted. Induces the collapse and paralysis of neuronal growth cones. Could serve as a ligand that guides specific growth cones by a motility-inhibiting mechanism. Binds to neuropilin. In Gallus gallus (Chicken), this protein is Semaphorin-3A (SEMA3A).